The chain runs to 289 residues: Inorganic pyrophosphatase (289 aa).

Serine 2 is subject to N-acetylserine. Lysine 57 is modified (N6-acetyllysine). Mg(2+) contacts are provided by aspartate 116, aspartate 121, and aspartate 153. Residue lysine 228 is modified to N6-acetyllysine. Serine 250 is subject to Phosphoserine.

It belongs to the PPase family. Homodimer. Mg(2+) serves as cofactor.

It is found in the cytoplasm. It catalyses the reaction diphosphate + H2O = 2 phosphate + H(+). In Macaca fascicularis (Crab-eating macaque), this protein is Inorganic pyrophosphatase (PPA1).